The following is a 310-amino-acid chain: MKSKIYKIISLYSFFPFQEKLIIDLKNKLLEIENENDLSGLLIFAREGINGTICAEKNVIDIVINLINKYADYRNLNIKVNFSKKKVFKKLKIKIKKEIVTMGVPEINPSENNGTYIDSTDWNKLIKNQNTIVIDTRNHYEVSIGTFQNSINPNTRNFSEFPKWVDDHLDNHLEDKESTNIAMFCTGGIRCEKATSLLKKKGYKNIYHLQGGILQYLDEISKEENLFEGECYVFDKRVALDQELEKGSYSICHACGMPVSIQDQKRKEYRKGIQCHFCIDQFSDDDRKRFEERQKQIDRLKVENHKIYKD.

In terms of domain architecture, Rhodanese spans Lys-127 to Asn-225. Cys-185 (cysteine persulfide intermediate) is an active-site residue.

The protein belongs to the TrhO family.

It catalyses the reaction uridine(34) in tRNA + AH2 + O2 = 5-hydroxyuridine(34) in tRNA + A + H2O. Catalyzes oxygen-dependent 5-hydroxyuridine (ho5U) modification at position 34 in tRNAs. The protein is tRNA uridine(34) hydroxylase of Prochlorococcus marinus (strain MIT 9215).